A 221-amino-acid polypeptide reads, in one-letter code: Stromal cell-derived factor 2-like protein 1 (221 aa).

Residues M1–A28 form the signal peptide. 3 MIR domains span residues A33 to G87, G95 to S150, and G151 to G205. The residue at position 215 (S215) is a Phosphoserine. The Prevents secretion from ER signature appears at H218–L221.

As to expression, ubiquitously expressed with high expression in the testis, ovary, uterus, and low expression in heart and skeletal muscle.

It localises to the endoplasmic reticulum lumen. The polypeptide is Stromal cell-derived factor 2-like protein 1 (Sdf2l1) (Mus musculus (Mouse)).